The primary structure comprises 381 residues: Molybdenum import ATP-binding protein ModC (381 aa).

The ABC transporter domain maps to 5–238 (SRSIQAQFRG…PALPLAASRD (234 aa)). 37-44 (GPSGCGKS) is a binding site for ATP. Positions 297-367 (NTSILNVLPA…VKGVALAPGR (71 aa)) constitute a Mop domain.

This sequence belongs to the ABC transporter superfamily. Molybdate importer (TC 3.A.1.8) family. In terms of assembly, the complex is composed of two ATP-binding proteins (ModC), two transmembrane proteins (ModB) and a solute-binding protein (ModA).

It is found in the cell inner membrane. The enzyme catalyses molybdate(out) + ATP + H2O = molybdate(in) + ADP + phosphate + H(+). Its function is as follows. Part of the ABC transporter complex ModABC involved in molybdenum import. Responsible for energy coupling to the transport system. The chain is Molybdenum import ATP-binding protein ModC from Rhodopseudomonas palustris (strain BisB18).